Reading from the N-terminus, the 295-residue chain is Cytidine deaminase (295 aa).

CMP/dCMP-type deaminase domains lie at T48–S168 and E187–L295. N89 to E91 contacts substrate. Position 102 (H102) interacts with Zn(2+). E104 functions as the Proton donor in the catalytic mechanism. The Zn(2+) site is built by C129 and C132.

It belongs to the cytidine and deoxycytidylate deaminase family. Homodimer. The cofactor is Zn(2+).

It carries out the reaction cytidine + H2O + H(+) = uridine + NH4(+). It catalyses the reaction 2'-deoxycytidine + H2O + H(+) = 2'-deoxyuridine + NH4(+). This enzyme scavenges exogenous and endogenous cytidine and 2'-deoxycytidine for UMP synthesis. The chain is Cytidine deaminase from Vibrio vulnificus (strain YJ016).